The primary structure comprises 163 residues: Nucleotide-binding protein YajQ (163 aa).

The protein belongs to the YajQ family.

In terms of biological role, nucleotide-binding protein. The chain is Nucleotide-binding protein YajQ from Shigella flexneri.